A 211-amino-acid chain; its full sequence is Claudin-7 (211 aa).

Residues 1 to 7 are Cytoplasmic-facing; the sequence is MANSGLQ. A helical transmembrane segment spans residues 8-28; the sequence is LLGFSMAMLGWVGLIASTAIP. Residues 29–81 are Extracellular-facing; it reads QWQMSSYAGDNIITAQAMYKGLWMECVTQSTGMMSCKMYDSVLALPAATQATR. The chain crosses the membrane as a helical span at residues 82 to 102; that stretch reads ALMIVSLVLGFLAMFVATMGM. Over 103-119 the chain is Cytoplasmic; it reads KCTRCGGDDKVKKARIA. The chain crosses the membrane as a helical span at residues 120-140; the sequence is MTGGIIFIVAGLAALVACSWI. Residues 141 to 160 lie on the Extracellular side of the membrane; the sequence is GHQIVTDFYNPLTPMNIKYE. Residues 161–181 form a helical membrane-spanning segment; it reads FGPAIFIGWAGSALVLLGGAL. The Cytoplasmic portion of the chain corresponds to 182 to 211; sequence LSCSCPGSESKAAYRAPRSYPKSNSSKEYV. The tract at residues 210-211 is interactions with TJP1, TJP2 and TJP3; the sequence is YV.

This sequence belongs to the claudin family. Directly interacts with TJP1/ZO-1, TJP2/ZO-2 and TJP3/ZO-3. The phosphorylated form interacts with EPCAM. Post-translationally, phosphorylated.

The protein resides in the cell membrane. It localises to the basolateral cell membrane. It is found in the cell junction. Its subcellular location is the tight junction. In terms of biological role, plays a major role in tight junction-specific obliteration of the intercellular space. In Rattus norvegicus (Rat), this protein is Claudin-7 (Cldn7).